Consider the following 168-residue polypeptide: MEMLKFGKFAALALAMAVAVGCSSKGGDASGEGANGGVDPNAGYGANSGAVDGSLSDEAALRAITTFYFEYDSSDLKPEAMRALDVHAKDLKGSGQRVVLEGHTDERGTREYNMALGERRAKAVQRYLVLQGVSPAQLELVSYGKERPVATGHDEQSWAQNRRVELKK.

An N-terminal signal peptide occupies residues 1 to 21; the sequence is MEMLKFGKFAALALAMAVAVG. C22 carries the N-palmitoyl cysteine lipid modification. The S-diacylglycerol cysteine moiety is linked to residue C22. One can recognise an OmpA-like domain in the interval 56–168; the sequence is SDEAALRAIT…AQNRRVELKK (113 aa). The disordered stretch occupies residues 147–168; it reads RPVATGHDEQSWAQNRRVELKK.

It belongs to the Pal lipoprotein family. As to quaternary structure, the Tol-Pal system is composed of five core proteins: the inner membrane proteins TolA, TolQ and TolR, the periplasmic protein TolB and the outer membrane protein Pal. They form a network linking the inner and outer membranes and the peptidoglycan layer.

The protein localises to the cell outer membrane. Its function is as follows. Part of the Tol-Pal system, which plays a role in outer membrane invagination during cell division and is important for maintaining outer membrane integrity. The sequence is that of Peptidoglycan-associated lipoprotein from Pseudomonas aeruginosa (strain ATCC 15692 / DSM 22644 / CIP 104116 / JCM 14847 / LMG 12228 / 1C / PRS 101 / PAO1).